A 136-amino-acid polypeptide reads, in one-letter code: Putative covalently bound cell wall protein 22 (136 aa).

The N-terminal stretch at M1–A18 is a signal peptide. Residues N21 and N82 are each glycosylated (N-linked (GlcNAc...) asparagine). Positions P73–V110 are disordered. Over residues K99 to V110 the composition is skewed to low complexity. G115 carries the GPI-anchor amidated glycine lipid modification. A propeptide spans A116–L136 (removed in mature form).

The protein belongs to the PGA59 family. The GPI-anchor is attached to the protein in the endoplasmic reticulum and serves to target the protein to the cell surface. There, the glucosamine-inositol phospholipid moiety is cleaved off and the GPI-modified mannoprotein is covalently attached via its lipidless GPI glycan remnant to the 1,6-beta-glucan of the outer cell wall layer.

It is found in the secreted. The protein resides in the cell wall. Its subcellular location is the membrane. Its function is as follows. Cell wall protein necessary for cell wall integrity. The chain is Putative covalently bound cell wall protein 22 (CCW22) from Saccharomyces cerevisiae (strain ATCC 204508 / S288c) (Baker's yeast).